The chain runs to 394 residues: Enoyl-CoA delta isomerase 2 (394 aa).

Residues 1 to 38 (MAMAYLAWRLARRSCPSSLQVTSFPVVQLHMNRTAMRA) constitute a mitochondrion transit peptide. Residues 39-124 (SQKDFENSMN…VSSLSPSLES (86 aa)) enclose the ACB domain. Lysine 51 carries the N6-acetyllysine; alternate modification. Lysine 51 is modified (N6-succinyllysine; alternate). N6-succinyllysine is present on lysine 55. Lysine 62 bears the N6-acetyllysine; alternate mark. N6-succinyllysine; alternate is present on lysine 62. Position 66 to 70 (66 to 70 (YALYK)) interacts with an acyl-CoA. Residues lysine 70, lysine 81, and lysine 90 each carry the N6-succinyllysine modification. Lysine 92 carries the N6-acetyllysine; alternate modification. Lysine 92 is modified (N6-succinyllysine; alternate). Lysine 92 contributes to the an acyl-CoA binding site. Serine 101 carries the post-translational modification Phosphoserine. An an acyl-CoA-binding site is contributed by tyrosine 111. Serine 119 bears the Phosphoserine mark. Positions 151–322 (TKIMFNRPKK…AQGLVTEVFP (172 aa)) are ECH-like. Lysine 161 carries the post-translational modification N6-succinyllysine. 198-202 (SGNDL) contributes to the substrate binding site. Residue lysine 289 is modified to N6-succinyllysine. The Microbody targeting signal signature appears at 392 to 394 (SKL).

This sequence in the C-terminal section; belongs to the enoyl-CoA hydratase/isomerase family. In terms of tissue distribution, abundant in heart, skeletal muscle and liver. Expressed in CD34(+) T-cells and CD34(+) bone marrow cells.

The protein resides in the mitochondrion. It is found in the peroxisome matrix. The catalysed reaction is a (3Z)-enoyl-CoA = a 4-saturated (2E)-enoyl-CoA. The enzyme catalyses (3Z)-octenoyl-CoA = (2E)-octenoyl-CoA. It carries out the reaction a (3E)-enoyl-CoA = a 4-saturated (2E)-enoyl-CoA. It catalyses the reaction (2E)-tetradecenoyl-CoA = (3Z)-tetradecenoyl-CoA. The catalysed reaction is (3E)-tetradecenoyl-CoA = (2E)-tetradecenoyl-CoA. The enzyme catalyses (3E)-octenoyl-CoA = (2E)-octenoyl-CoA. It carries out the reaction (3E)-nonenoyl-CoA = (2E)-nonenoyl-CoA. The protein operates within lipid metabolism; fatty acid beta-oxidation. Functionally, able to isomerize both 3-cis and 3-trans double bonds into the 2-trans form in a range of enoyl-CoA species. Has a preference for 3-trans substrates. In Homo sapiens (Human), this protein is Enoyl-CoA delta isomerase 2 (ECI2).